The chain runs to 406 residues: Eukaryotic initiation factor 4A-I (406 aa).

Residues 1 to 21 form a disordered region; the sequence is MSASQDSRSRDNGPDGMEPEG. The residue at position 2 (serine 2) is an N-acetylserine. Serine 4 carries the post-translational modification Phosphoserine. Positions 32-60 match the Q motif motif; it reads DSFDDMNLSESLLRGIYAYGFEKPSAIQQ. In terms of domain architecture, Helicase ATP-binding spans 63–234; that stretch reads ILPCIKGYDV…KKFMRDPIRI (172 aa). 76–83 serves as a coordination point for ATP; it reads AQSGTGKT. N6-acetyllysine is present on lysine 118. Lysine 146 is covalently cross-linked (Glycyl lysine isopeptide (Lys-Gly) (interchain with G-Cter in SUMO2)). A Phosphothreonine modification is found at threonine 158. The residue at position 174 (lysine 174) is an N6-acetyllysine. The DEAD box motif lies at 182–185; it reads DEAD. Lysine 193 carries the post-translational modification N6-acetyllysine. A Glycyl lysine isopeptide (Lys-Gly) (interchain with G-Cter in SUMO2) cross-link involves residue lysine 225. Lysine 238 carries the N6-acetyllysine; alternate modification. A Glycyl lysine isopeptide (Lys-Gly) (interchain with G-Cter in SUMO2); alternate cross-link involves residue lysine 238. The region spanning 245–406 is the Helicase C-terminal domain; the sequence is GIRQFYINVE…EMPLNVADLI (162 aa). Glycyl lysine isopeptide (Lys-Gly) (interchain with G-Cter in SUMO2) cross-links involve residues lysine 309, lysine 369, and lysine 381.

It belongs to the DEAD box helicase family. eIF4A subfamily. EIF4F is a multi-subunit complex, the composition of which varies with external and internal environmental conditions. It is composed of at least EIF4A, EIF4E and EIF4G1/EIF4G3. Interacts with PAIP1, EIF4E and UPF2. Found in a complex with XPO7, EIF4A1, ARHGAP1, VPS26A, VPS29, VPS35 and SFN. May interact with NOM1. Interacts with PDCD4; this interferes with the interaction between EIF4A and EIF4G. Interacts with RBM4. Interacts with DDX3X in an RNA-independent manner. Interacts with PKP1 (via N-terminus); the interaction promotes EIF4A1 recruitment to the cap-dependent translation complex and EIF4A1 ATPase activity.

The protein resides in the cytoplasm. The protein localises to the perinuclear region. Its subcellular location is the cell membrane. It localises to the stress granule. It catalyses the reaction ATP + H2O = ADP + phosphate + H(+). Functionally, ATP-dependent RNA helicase which is a subunit of the eIF4F complex involved in cap recognition and is required for mRNA binding to ribosome. In the current model of translation initiation, eIF4A unwinds RNA secondary structures in the 5'-UTR of mRNAs which is necessary to allow efficient binding of the small ribosomal subunit, and subsequent scanning for the initiator codon. As a result, promotes cell proliferation and growth. The protein is Eukaryotic initiation factor 4A-I (EIF4A1) of Bos taurus (Bovine).